The primary structure comprises 1421 residues: ALK tyrosine kinase receptor homolog scd-2 (1421 aa).

The signal sequence occupies residues 1-20 (MRKRRLWWFVVLFRVTLVGA). At 21–903 (ILPNETFDVR…DTCEEIQIWT (883 aa)) the chain is on the extracellular side. 6 N-linked (GlcNAc...) asparagine glycosylation sites follow: Asn-24, Asn-44, Asn-70, Asn-83, Asn-119, and Asn-201. The LDL-receptor class A domain maps to 300 to 338 (QCSRGDQFLCSISANTRCLQNAQCDSRIDCDDESDEMDC). Intrachain disulfides connect Cys-301/Cys-317, Cys-309/Cys-329, and Cys-323/Cys-338. An MAM domain is found at 339 to 542 (GNINGTMCDF…NLSFSPTCFE (204 aa)). N-linked (GlcNAc...) asparagine glycosylation is found at Asn-342, Asn-362, Asn-495, Asn-533, Asn-546, Asn-633, Asn-726, Asn-793, Asn-849, Asn-873, and Asn-893. Residues 904–924 (LYNITFLIFAALTIIGALFVV) form a helical membrane-spanning segment. Residues 925–1421 (YHYRNREKQM…SVPLLECQTR (497 aa)) lie on the Cytoplasmic side of the membrane. In terms of domain architecture, Protein kinase spans 976-1261 (IERGRVLGRG…GMPFPIHPAV (286 aa)). ATP contacts are provided by residues 982 to 990 (LGRGNFGEV) and Lys-1003. Asp-1106 functions as the Proton acceptor in the catalytic mechanism.

The protein belongs to the protein kinase superfamily. Tyr protein kinase family. Insulin receptor subfamily. Interacts (via cytoplasmic domain) with fsn-1 (via SPRY domain). Expressed in AIA sensory neurons.

It localises to the cell membrane. The enzyme catalyses L-tyrosyl-[protein] + ATP = O-phospho-L-tyrosyl-[protein] + ADP + H(+). Probable tyrosine-protein kinase receptor which regulates the dauer/non-dauer developmental decision probably by controlling daf-3 transcriptional activity in parallel or together with the TGF-beta pathway. Regulates integration of conflicting sensory cues in AIA interneurons. May act as a receptor for hen-1. In AWA neurons, together with hen-1, plays a role in regulating olfactory adaptation by controlling the forgetting sensory responses to odorants such as diacetyl. This is ALK tyrosine kinase receptor homolog scd-2 from Caenorhabditis elegans.